Reading from the N-terminus, the 376-residue chain is Respiration factor 1 (376 aa).

4 disordered regions span residues 1–23 (MKDL…DNRG), 88–107 (VNVT…NSTK), 258–279 (FKEK…TGSS), and 347–376 (GVNE…QHTN). The span at 354 to 376 (NSSNLNNSNSGTPHNHNQNQHTN) shows a compositional bias: low complexity.

Its subcellular location is the cytoplasm. The protein resides in the nucleus. The protein localises to the mitochondrion. Its function is as follows. Mitochondrial and nuclear transcriptional activator required for respiratory growth. This chain is Respiration factor 1 (RSF1), found in Saccharomyces cerevisiae (strain YJM789) (Baker's yeast).